Here is a 160-residue protein sequence, read N- to C-terminus: SsrA-binding protein (160 aa).

The protein belongs to the SmpB family.

It is found in the cytoplasm. Functionally, required for rescue of stalled ribosomes mediated by trans-translation. Binds to transfer-messenger RNA (tmRNA), required for stable association of tmRNA with ribosomes. tmRNA and SmpB together mimic tRNA shape, replacing the anticodon stem-loop with SmpB. tmRNA is encoded by the ssrA gene; the 2 termini fold to resemble tRNA(Ala) and it encodes a 'tag peptide', a short internal open reading frame. During trans-translation Ala-aminoacylated tmRNA acts like a tRNA, entering the A-site of stalled ribosomes, displacing the stalled mRNA. The ribosome then switches to translate the ORF on the tmRNA; the nascent peptide is terminated with the 'tag peptide' encoded by the tmRNA and targeted for degradation. The ribosome is freed to recommence translation, which seems to be the essential function of trans-translation. The polypeptide is SsrA-binding protein (Pectobacterium atrosepticum (strain SCRI 1043 / ATCC BAA-672) (Erwinia carotovora subsp. atroseptica)).